The primary structure comprises 620 residues: Cell fusion protein cfr1 (620 aa).

The region spanning 79–169 (LPSPPVLKLK…KHITIKTLRM (91 aa)) is the Fibronectin type-III domain. Positions 167 to 256 (LRMIDLTGIQ…RLVNVSGFYI (90 aa)) constitute a BRCT domain. Disordered regions lie at residues 287 to 566 (QPKN…PEKA) and 588 to 620 (KQSSEPTADDNLIPNKEAEIIQSSDEFESVNID). A compositionally biased stretch (polar residues) spans 303–314 (APQQTTQQGTQN). Low complexity predominate over residues 315–330 (SANAEPSSSASVPAEA). The segment covering 352 to 375 (SKPNEAPTSSENIKADQPENSTKQ) has biased composition (polar residues). Basic and acidic residues predominate over residues 382–392 (MQIKDAEEHSN). A compositionally biased stretch (polar residues) spans 393 to 406 (LESTPAAQQTSEVE). Low complexity predominate over residues 424–434 (NVNEENNTPET). Polar residues predominate over residues 445–468 (NTAAESLINQEETTSGEAVTKSTV). Acidic residues predominate over residues 472–484 (ANEEEAEPNEIIE). The segment covering 506–515 (NNANSENANG) has biased composition (polar residues). Residues 517–537 (TDEKIIEAPLDTKENSDDDKP) are compositionally biased toward basic and acidic residues.

Belongs to the CHS5 family.

Its subcellular location is the golgi apparatus. In terms of biological role, required for cell fusion, independently of fus1. Appears to have a role in transporting proteins that are involved in mating. May act as a scaffold to retain cell fusion proteins in the cisternae of the Golgi. Degraded at the onset of mating and this leads to release of cell fusion proteins. This is Cell fusion protein cfr1 (cfr1) from Schizosaccharomyces pombe (strain 972 / ATCC 24843) (Fission yeast).